The following is a 328-amino-acid chain: uncharacterized protein (328 aa).

This sequence belongs to the Gfo/Idh/MocA family.

This is an uncharacterized protein from Escherichia coli (strain K12).